Here is a 323-residue protein sequence, read N- to C-terminus: Phosphopantothenate--cysteine ligase 2 (323 aa).

It belongs to the PPC synthetase family. In terms of assembly, homodimer.

It carries out the reaction (R)-4'-phosphopantothenate + L-cysteine + CTP = N-[(R)-4-phosphopantothenoyl]-L-cysteine + CMP + diphosphate + H(+). It participates in cofactor biosynthesis; coenzyme A biosynthesis; CoA from (R)-pantothenate: step 2/5. Catalyzes the first step in the biosynthesis of coenzyme A from vitamin B5, where cysteine is conjugated to 4'-phosphopantothenate to form 4-phosphopantothenoylcysteine. This is Phosphopantothenate--cysteine ligase 2 from Oryza sativa subsp. japonica (Rice).